The following is a 317-amino-acid chain: Transaldolase (317 aa).

The Schiff-base intermediate with substrate role is filled by K132.

It belongs to the transaldolase family. Type 1 subfamily. Homodimer.

The protein localises to the cytoplasm. The enzyme catalyses D-sedoheptulose 7-phosphate + D-glyceraldehyde 3-phosphate = D-erythrose 4-phosphate + beta-D-fructose 6-phosphate. It participates in carbohydrate degradation; pentose phosphate pathway; D-glyceraldehyde 3-phosphate and beta-D-fructose 6-phosphate from D-ribose 5-phosphate and D-xylulose 5-phosphate (non-oxidative stage): step 2/3. Functionally, transaldolase is important for the balance of metabolites in the pentose-phosphate pathway. The protein is Transaldolase of Yersinia pseudotuberculosis serotype IB (strain PB1/+).